The primary structure comprises 145 residues: D-aminoacyl-tRNA deacylase (145 aa).

Residues 137-138 carry the Gly-cisPro motif, important for rejection of L-amino acids motif; sequence GP.

It belongs to the DTD family. As to quaternary structure, homodimer.

The protein localises to the cytoplasm. The enzyme catalyses glycyl-tRNA(Ala) + H2O = tRNA(Ala) + glycine + H(+). It carries out the reaction a D-aminoacyl-tRNA + H2O = a tRNA + a D-alpha-amino acid + H(+). Its function is as follows. An aminoacyl-tRNA editing enzyme that deacylates mischarged D-aminoacyl-tRNAs. Also deacylates mischarged glycyl-tRNA(Ala), protecting cells against glycine mischarging by AlaRS. Acts via tRNA-based rather than protein-based catalysis; rejects L-amino acids rather than detecting D-amino acids in the active site. By recycling D-aminoacyl-tRNA to D-amino acids and free tRNA molecules, this enzyme counteracts the toxicity associated with the formation of D-aminoacyl-tRNA entities in vivo and helps enforce protein L-homochirality. This chain is D-aminoacyl-tRNA deacylase, found in Photobacterium profundum (strain SS9).